Here is a 132-residue protein sequence, read N- to C-terminus: Small ribosomal subunit protein uS8 (132 aa).

Belongs to the universal ribosomal protein uS8 family. As to quaternary structure, part of the 30S ribosomal subunit. Contacts proteins S5 and S12.

In terms of biological role, one of the primary rRNA binding proteins, it binds directly to 16S rRNA central domain where it helps coordinate assembly of the platform of the 30S subunit. The protein is Small ribosomal subunit protein uS8 of Aliarcobacter butzleri (strain RM4018) (Arcobacter butzleri).